Consider the following 465-residue polypeptide: Ribulose bisphosphate carboxylase large chain (465 aa).

Lys-4 is subject to N6,N6,N6-trimethyllysine. Residues Asn-113 and Thr-163 each coordinate substrate. Residue Lys-165 is the Proton acceptor of the active site. Lys-167 contacts substrate. Positions 191, 193, and 194 each coordinate Mg(2+). Lys-191 carries the post-translational modification N6-carboxylysine. His-284 acts as the Proton acceptor in catalysis. Substrate contacts are provided by Arg-285, His-317, and Ser-369.

Belongs to the RuBisCO large chain family. Type I subfamily. As to quaternary structure, heterohexadecamer of 8 large chains and 8 small chains; disulfide-linked. The disulfide link is formed within the large subunit homodimers. The cofactor is Mg(2+). Post-translationally, the disulfide bond which can form in the large chain dimeric partners within the hexadecamer appears to be associated with oxidative stress and protein turnover.

The protein localises to the plastid. Its subcellular location is the chloroplast. It catalyses the reaction 2 (2R)-3-phosphoglycerate + 2 H(+) = D-ribulose 1,5-bisphosphate + CO2 + H2O. It carries out the reaction D-ribulose 1,5-bisphosphate + O2 = 2-phosphoglycolate + (2R)-3-phosphoglycerate + 2 H(+). RuBisCO catalyzes two reactions: the carboxylation of D-ribulose 1,5-bisphosphate, the primary event in carbon dioxide fixation, as well as the oxidative fragmentation of the pentose substrate in the photorespiration process. Both reactions occur simultaneously and in competition at the same active site. The polypeptide is Ribulose bisphosphate carboxylase large chain (Passiflora quadrangularis (Grenadine)).